The chain runs to 163 residues: Pheromone-binding protein (163 aa).

The N-terminal stretch at 1 to 22 is a signal peptide; it reads MMSVRLMLVVAVWLCLRVDASQ. 3 disulfide bridges follow: cysteine 39/cysteine 74, cysteine 70/cysteine 129, and cysteine 117/cysteine 138.

It belongs to the PBP/GOBP family. Antenna.

In terms of biological role, this major soluble protein in olfactory sensilla of male moths might serve to solubilize the extremely hydrophobic pheromone molecules and to transport pheromone through the aqueous lymph to receptors located on olfactory cilia. In Heliothis virescens (Tobacco budworm moth), this protein is Pheromone-binding protein.